Here is a 455-residue protein sequence, read N- to C-terminus: Major facilitator superfamily domain-containing protein 10 (455 aa).

The next 11 membrane-spanning stretches (helical) occupy residues 27 to 47, 86 to 106, 113 to 135, 148 to 168, 176 to 196, 202 to 222, 275 to 295, 310 to 327, 336 to 356, 359 to 379, and 421 to 441; these read VVFL…PLLP, VLFG…CAPL, CLGR…AVWA, LIGG…ADLG, GMAV…MLGA, MAPW…FCFL, LGLV…TLSF, KMFF…GAYA, VAAV…IGWG, LPVL…VVPC, and LAGA…PFFL.

Belongs to the major facilitator superfamily. Expressed in luminal membrane of renal tubules (at protein level). Detected in all tissues tested with higher expression in heart, splee, kidney, leukocytes and prostate.

It localises to the nucleus inner membrane. It is found in the cell membrane. Functionally, probable organic anion transporter which may serve as a transporter for some non-steroidal anti-inflammatory drugs (NSAIDs) as well as other organic anions across the luminal membranes of renal proximal tubules at the final excretion step into the urine. The chain is Major facilitator superfamily domain-containing protein 10 (MFSD10) from Homo sapiens (Human).